The following is a 360-amino-acid chain: Peptide chain release factor 1 (360 aa).

Gln235 is modified (N5-methylglutamine). A compositionally biased stretch (basic and acidic residues) spans 284–293; sequence HKRQQEEAST. The disordered stretch occupies residues 284-305; sequence HKRQQEEASTRRNLLGSGDRSD.

The protein belongs to the prokaryotic/mitochondrial release factor family. Methylated by PrmC. Methylation increases the termination efficiency of RF1.

The protein resides in the cytoplasm. Functionally, peptide chain release factor 1 directs the termination of translation in response to the peptide chain termination codons UAG and UAA. The protein is Peptide chain release factor 1 of Pectobacterium atrosepticum (strain SCRI 1043 / ATCC BAA-672) (Erwinia carotovora subsp. atroseptica).